The following is a 161-amino-acid chain: Ribonuclease H (161 aa).

The 142-residue stretch at 11-152 (GPRPVVIHTD…ADQLARDGLT (142 aa)) folds into the RNase H type-1 domain. Positions 20, 58, 80, and 144 each coordinate Mg(2+). Residues 137–161 (HDENERADQLARDGLTENRMKSRIG) form a disordered region.

It belongs to the RNase H family. As to quaternary structure, monomer. Mg(2+) serves as cofactor.

It localises to the cytoplasm. The catalysed reaction is Endonucleolytic cleavage to 5'-phosphomonoester.. Endonuclease that specifically degrades the RNA of RNA-DNA hybrids. The protein is Ribonuclease H of Rhodopseudomonas palustris (strain HaA2).